Consider the following 209-residue polypeptide: Guanylate kinase (209 aa).

Positions 16–198 constitute a Guanylate kinase-like domain; the sequence is GRLVIISGPS…AVTEICQILL (183 aa). Residue 23–30 coordinates ATP; the sequence is GPSGAGKS.

This sequence belongs to the guanylate kinase family.

It is found in the cytoplasm. It carries out the reaction GMP + ATP = GDP + ADP. Functionally, essential for recycling GMP and indirectly, cGMP. This is Guanylate kinase from Rhodopirellula baltica (strain DSM 10527 / NCIMB 13988 / SH1).